Here is a 53-residue protein sequence, read N- to C-terminus: ATP synthase protein 8 (53 aa).

The helical transmembrane segment at 9–29 threads the bilayer; it reads WIFFLFFFICIFLIFNIMNYF.

Belongs to the ATPase protein 8 family. In terms of assembly, F-type ATPases have 2 components, CF(1) - the catalytic core - and CF(0) - the membrane proton channel.

Its subcellular location is the mitochondrion membrane. Functionally, mitochondrial membrane ATP synthase (F(1)F(0) ATP synthase or Complex V) produces ATP from ADP in the presence of a proton gradient across the membrane which is generated by electron transport complexes of the respiratory chain. F-type ATPases consist of two structural domains, F(1) - containing the extramembraneous catalytic core and F(0) - containing the membrane proton channel, linked together by a central stalk and a peripheral stalk. During catalysis, ATP synthesis in the catalytic domain of F(1) is coupled via a rotary mechanism of the central stalk subunits to proton translocation. Part of the complex F(0) domain. Minor subunit located with subunit a in the membrane. The protein is ATP synthase protein 8 (mt:ATPase8) of Bombyx mori (Silk moth).